The chain runs to 519 residues: Serine/threonine-protein kinase RIO3 (519 aa).

2 positions are modified to phosphoserine: Ser8 and Ser112. The interval 121–159 is disordered; sequence PYEDSDSSEDEVDWQDTRDDPYRPAKPVPTPKKGFIGKG. A Phosphotyrosine modification is found at Tyr122. Residues 124–134 are compositionally biased toward acidic residues; sequence DSDSSEDEVDW. Phosphoserine is present on residues Ser125, Ser127, and Ser128. Positions 251–519 constitute a Protein kinase domain; sequence ETITGCISTG…DGDPPLLYDE (269 aa). Residues 257-265 and Lys290 contribute to the ATP site; that span reads ISTGKESVV. Asp406 functions as the Proton acceptor in the catalytic mechanism.

This sequence belongs to the protein kinase superfamily. RIO-type Ser/Thr kinase family. In terms of assembly, interacts with CASP10. Interacts with IRF3; RIOK3 probably mediates the interaction of TBK1 with IRF3. Associated with 40S pre-ribosomal particles. The cofactor is Mg(2+). Post-translationally, autophosphorylated (in vitro). As to expression, widely expressed.

Its subcellular location is the cytoplasm. The enzyme catalyses L-seryl-[protein] + ATP = O-phospho-L-seryl-[protein] + ADP + H(+). It catalyses the reaction L-threonyl-[protein] + ATP = O-phospho-L-threonyl-[protein] + ADP + H(+). Its function is as follows. Involved in regulation of type I interferon (IFN)-dependent immune response which plays a critical role in the innate immune response against DNA and RNA viruses. May act as an adapter protein essential for the recruitment of TBK1 to IRF3. Phosphorylates IFIH1 on 'Ser-828' interfering with IFIH1 filament assembly on long dsRNA and resulting in attenuated IFIH1-signaling. Can inhibit CASP10 isoform 7-mediated activation of the NF-kappaB signaling pathway. May play a role in the biogenesis of the 40S ribosomal subunit. Involved in the processing of 21S pre-rRNA to the mature 18S rRNA. This Homo sapiens (Human) protein is Serine/threonine-protein kinase RIO3 (RIOK3).